A 174-amino-acid polypeptide reads, in one-letter code: 3-hydroxydecanoyl-[acyl-carrier-protein] dehydratase (174 aa).

Residue H73 is part of the active site.

Belongs to the thioester dehydratase family. FabA subfamily. In terms of assembly, homodimer.

Its subcellular location is the cytoplasm. The enzyme catalyses a (3R)-hydroxyacyl-[ACP] = a (2E)-enoyl-[ACP] + H2O. It catalyses the reaction (3R)-hydroxydecanoyl-[ACP] = (2E)-decenoyl-[ACP] + H2O. It carries out the reaction (2E)-decenoyl-[ACP] = (3Z)-decenoyl-[ACP]. The protein operates within lipid metabolism; fatty acid biosynthesis. Its function is as follows. Necessary for the introduction of cis unsaturation into fatty acids. Catalyzes the dehydration of (3R)-3-hydroxydecanoyl-ACP to E-(2)-decenoyl-ACP and then its isomerization to Z-(3)-decenoyl-ACP. Can catalyze the dehydratase reaction for beta-hydroxyacyl-ACPs with saturated chain lengths up to 16:0, being most active on intermediate chain length. The polypeptide is 3-hydroxydecanoyl-[acyl-carrier-protein] dehydratase (Teredinibacter turnerae (strain ATCC 39867 / T7901)).